A 446-amino-acid polypeptide reads, in one-letter code: Palmitoyltransferase PFA4 (446 aa).

Residues 1–8 (MAVQLKWP) are Cytoplasmic-facing. Residues 9-29 (ILGVIIPCIIIFSLSYGSHYF) form a helical membrane-spanning segment. Over 30–40 (ILRHHLTMKQQ) the chain is Lumenal. A helical membrane pass occupies residues 41–61 (LIYEFYVTMIWISYLLAIYTN). Residues 62–161 (PGRVPKNYKP…GNNNLPHFMR (100 aa)) are Cytoplasmic-facing. A DHHC domain is found at 114 to 164 (RYCKKCNNYKPPRSHHCKICQQCVLQMDHHCPWTLNCVGNNNLPHFMRFLG). Catalysis depends on Cys-144, which acts as the S-palmitoyl cysteine intermediate. Residues 162–182 (FLGWIIWGTGYLMIQLIKLII) traverse the membrane as a helical segment. The Lumenal segment spans residues 183 to 201 (NYYENSNMPHYLFNKTELV). The chain crosses the membrane as a helical span at residues 202 to 222 (AIIAITPLNFFVFASILVLFI). The Cytoplasmic segment spans residues 223–446 (RCLINICKGM…TDFGVDEDSD (224 aa)).

The protein belongs to the DHHC palmitoyltransferase family. PFA4 subfamily.

The protein localises to the endoplasmic reticulum membrane. The enzyme catalyses L-cysteinyl-[protein] + hexadecanoyl-CoA = S-hexadecanoyl-L-cysteinyl-[protein] + CoA. Its function is as follows. Mediates the reversible addition of palmitate to target proteins, thereby regulating their membrane association and biological function. The chain is Palmitoyltransferase PFA4 from Candida albicans (strain SC5314 / ATCC MYA-2876) (Yeast).